Here is a 141-residue protein sequence, read N- to C-terminus: Large ribosomal subunit protein uL11 (141 aa).

It belongs to the universal ribosomal protein uL11 family. In terms of assembly, part of the ribosomal stalk of the 50S ribosomal subunit. Interacts with L10 and the large rRNA to form the base of the stalk. L10 forms an elongated spine to which L12 dimers bind in a sequential fashion forming a multimeric L10(L12)X complex. Post-translationally, one or more lysine residues are methylated.

In terms of biological role, forms part of the ribosomal stalk which helps the ribosome interact with GTP-bound translation factors. The protein is Large ribosomal subunit protein uL11 of Oceanobacillus iheyensis (strain DSM 14371 / CIP 107618 / JCM 11309 / KCTC 3954 / HTE831).